A 574-amino-acid chain; its full sequence is Cytochrome P450 306a1 (574 aa).

Over residues 303–314 the composition is skewed to basic and acidic residues; sequence EKEQLRQSKEAD. Residues 303-333 are disordered; it reads EKEQLRQSKEADPSQEQSEADEDDEESDEED. Residues 320-333 are compositionally biased toward acidic residues; sequence SEADEDDEESDEED. Cysteine 505 contributes to the heme binding site.

The protein belongs to the cytochrome P450 family. The cofactor is heme. First seen at the early (syncytial) blastoderm stage 4. During cellularization of the blastoderm (stage 5), stripes of expression appear and remain through to stage 10. Expression becomes undetectable during germ band retraction (stages 11-14). By stage 15, some expression resumes in the primordium of the ring gland, so that by stage 17 strong expression is seen, but only in the ring gland. This specific localization continues throughout the larval instars (at protein level). Expressed in the prothoracic gland cells of the larval ring gland (RG). Levels decline just after the molt to the third instar then increase later during the wandering stage. Low levels of expression are seen in the larval brain and fat body. In the adult, majority of expression is restricted to the ovaries, with low levels in the head and carcass of both sexes.

Its subcellular location is the endoplasmic reticulum membrane. The protein resides in the microsome membrane. It carries out the reaction 2,22,25-trideoxyecdysone + 2 reduced [adrenodoxin] + O2 + 2 H(+) = 2,22-dideoxyecdysone + 2 oxidized [adrenodoxin] + H2O. Its pathway is steroid biosynthesis; ecdysteroid biosynthesis. Its function is as follows. Involved in the metabolism of insect hormones; responsible for ecdysteroid C25-hydroxylase activity. May be involved in the breakdown of synthetic insecticides. This chain is Cytochrome P450 306a1, found in Drosophila melanogaster (Fruit fly).